Here is a 512-residue protein sequence, read N- to C-terminus: Putative ribose/galactose/methyl galactoside import ATP-binding protein 2 (512 aa).

ABC transporter domains are found at residues 14–251 (IALT…VGRQ) and 262–507 (TSGN…TQRE). 46 to 53 (GENGAGKS) provides a ligand contact to ATP.

The protein belongs to the ABC transporter superfamily. Carbohydrate importer 2 (CUT2) (TC 3.A.1.2) family.

It is found in the cell inner membrane. The catalysed reaction is D-ribose(out) + ATP + H2O = D-ribose(in) + ADP + phosphate + H(+). The enzyme catalyses D-galactose(out) + ATP + H2O = D-galactose(in) + ADP + phosphate + H(+). In terms of biological role, part of an ABC transporter complex involved in carbohydrate import. Could be involved in ribose, galactose and/or methyl galactoside import. Responsible for energy coupling to the transport system. This chain is Putative ribose/galactose/methyl galactoside import ATP-binding protein 2, found in Burkholderia cenocepacia (strain HI2424).